The chain runs to 196 residues: MSANSLLGSLRELQVLVLNPPGEVSDALVLQLIRIGCSVRQCWPPPESFDVPVDVVFTSIFQNRHHDEIAALLAAGTPRTTLVALVEYESPAVLSQIIELECHGVITQPLDAHRVLPVLVSARRISEEMAKLKQKTEQLQERIAGQARINQAKALLMQRHGWDEREAHQYLSREAMKRREPILKIAQELLGNEPSA.

The ANTAR domain occupies 129–190; it reads MAKLKQKTEQ…PILKIAQELL (62 aa).

As to quaternary structure, forms a complex with AmiC.

Functionally, positive controlling element of AmiE, the gene for aliphatic amidase. Acts as a transcriptional antitermination factor. It is thought to allow RNA polymerase read through a rho-independent transcription terminator between the AmiE promoter and gene. This Pseudomonas aeruginosa (strain ATCC 15692 / DSM 22644 / CIP 104116 / JCM 14847 / LMG 12228 / 1C / PRS 101 / PAO1) protein is Aliphatic amidase regulator (amiR).